Here is a 1079-residue protein sequence, read N- to C-terminus: Intraflagellar transport protein 80 (1079 aa).

The interval 495 to 514 (GDMIRPSTVQNQPSTQGLPN) is disordered. Positions 501–514 (STVQNQPSTQGLPN) are enriched in polar residues.

It localises to the cell projection. The protein localises to the cilium. Its subcellular location is the flagellum. It is found in the cytoplasm. The protein resides in the cytoskeleton. It localises to the flagellum axoneme. The protein localises to the flagellum basal body. Functionally, component of the intraflagellar transport complex B (IFT-B) involved in flagellar assembly. This Giardia intestinalis (strain ATCC 50803 / WB clone C6) (Giardia lamblia) protein is Intraflagellar transport protein 80.